A 318-amino-acid polypeptide reads, in one-letter code: ATP-dependent (S)-NAD(P)H-hydrate dehydratase (318 aa).

The 311-residue stretch at 3–313 (AREVFKRVIP…KEIGPAFDSL (311 aa)) folds into the YjeF C-terminal domain. Residues Gly-119 and 172–178 (NTNEFKR) each bind (6S)-NADPHX. ATP is bound by residues 210–214 (KGSKD) and 229–238 (TSLRRCGGQG). Asp-239 provides a ligand contact to (6S)-NADPHX.

It belongs to the NnrD/CARKD family. Mg(2+) serves as cofactor.

The protein localises to the cytoplasm. The catalysed reaction is (6S)-NADHX + ATP = ADP + phosphate + NADH + H(+). The enzyme catalyses (6S)-NADPHX + ATP = ADP + phosphate + NADPH + H(+). Its function is as follows. Catalyzes the dehydration of the S-form of NAD(P)HX at the expense of ATP, which is converted to ADP. Together with NAD(P)HX epimerase, which catalyzes the epimerization of the S- and R-forms, the enzyme allows the repair of both epimers of NAD(P)HX, a damaged form of NAD(P)H that is a result of enzymatic or heat-dependent hydration. The polypeptide is ATP-dependent (S)-NAD(P)H-hydrate dehydratase (Batrachochytrium dendrobatidis (strain JAM81 / FGSC 10211) (Frog chytrid fungus)).